The primary structure comprises 73 residues: Translation initiation factor IF-1 (73 aa).

The region spanning 1–73 (MPKKDGAIEI…TRGRIVYRYK (73 aa)) is the S1-like domain.

The protein belongs to the IF-1 family. In terms of assembly, component of the 30S ribosomal translation pre-initiation complex which assembles on the 30S ribosome in the order IF-2 and IF-3, IF-1 and N-formylmethionyl-tRNA(fMet); mRNA recruitment can occur at any time during PIC assembly.

The protein localises to the cytoplasm. In terms of biological role, one of the essential components for the initiation of protein synthesis. Stabilizes the binding of IF-2 and IF-3 on the 30S subunit to which N-formylmethionyl-tRNA(fMet) subsequently binds. Helps modulate mRNA selection, yielding the 30S pre-initiation complex (PIC). Upon addition of the 50S ribosomal subunit IF-1, IF-2 and IF-3 are released leaving the mature 70S translation initiation complex. The chain is Translation initiation factor IF-1 from Salinispora arenicola (strain CNS-205).